We begin with the raw amino-acid sequence, 314 residues long: Melanoma-associated antigen 6 (314 aa).

Residues 1 to 20 (MPLEQRSQHCKPEEGLEARG) are compositionally biased toward basic and acidic residues. Residues 1-99 (MPLEQRSQHC…QEEEGPSTFP (99 aa)) form a disordered region. Residues 21 to 44 (EALGLVGAQAPATEEQEAASSSST) are compositionally biased toward low complexity. Residues 65–87 (PQGASSLPTTMNYPLWSQSYEDS) are compositionally biased toward polar residues. The 200-residue stretch at 109-308 (LSRKVAKLVH…ISYPLLHEWA (200 aa)) folds into the MAGE domain.

Interacts with TRIM28. Post-translationally, ubiquitinated by the DCX(DCAF12) complex specifically recognizes the diglutamate (Glu-Glu) at the C-terminus, leading to its degradation. Expressed in many tumors of several types, such as melanoma, head and neck squamous cell carcinoma, lung carcinoma and breast carcinoma, but not in normal tissues except for testes.

Activator of ubiquitin ligase activity of RING-type zinc finger-containing E3 ubiquitin-protein ligases that acts as a repressor of autophagy. May enhance ubiquitin ligase activity of TRIM28 and stimulate p53/TP53 ubiquitination by TRIM28. Proposed to act through recruitment and/or stabilization of the Ubl-conjugating enzyme (E2) at the E3:substrate complex. May play a role in tumor transformation or aspects of tumor progression. In vitro promotes cell viability in melanoma cell lines. In Homo sapiens (Human), this protein is Melanoma-associated antigen 6.